The sequence spans 256 residues: Ras-related protein Rab-26 (256 aa).

Residues 1 to 51 are disordered; sequence MSRKKTPKSKGASTPAASTLPTANGARPARSGTALSGPDAPPNGPLQPGRP. Over residues 12-23 the composition is skewed to low complexity; that stretch reads ASTPAASTLPTA. Residues S72, G73, V74, G75, K76, T77, C78, S95, and T96 each contribute to the GTP site. Residue T77 participates in Mg(2+) binding. 2 consecutive short sequence motifs (switch) follow at residues 86-101 and 119-136; these read GAFLAGTFISTVGIDF and DTAGQERFRSVTHAYYRD. Mg(2+) contacts are provided by T96 and D119. 6 residues coordinate GTP: G122, N177, K178, D180, A208, and K209. 2 S-geranylgeranyl cysteine lipidation sites follow: C253 and C254.

It belongs to the small GTPase superfamily. Rab family. In terms of assembly, interacts with RIMS1. Interacts with ADRA2B. Requires Mg(2+) as cofactor. As to expression, predominantly expressed in brain.

The protein resides in the golgi apparatus membrane. It localises to the cytoplasmic vesicle. Its subcellular location is the secretory vesicle membrane. The enzyme catalyses GTP + H2O = GDP + phosphate + H(+). Its activity is regulated as follows. Regulated by guanine nucleotide exchange factors (GEFs) which promote the exchange of bound GDP for free GTP. Regulated by GTPase activating proteins (GAPs) which increase the GTP hydrolysis activity. Inhibited by GDP dissociation inhibitors (GDIs). The small GTPases Rab are key regulators of intracellular membrane trafficking, from the formation of transport vesicles to their fusion with membranes. Rabs cycle between an inactive GDP-bound form and an active GTP-bound form that is able to recruit to membranes different set of downstream effectors directly responsible for vesicle formation, movement, tethering and fusion. RAB26 mediates transport of ADRA2A and ADRA2B from the Golgi to the cell membrane. Plays a role in the maturation of zymogenic granules and in pepsinogen secretion in the stomach. Plays a role in the secretion of amylase from acinar granules in the parotid gland. This Homo sapiens (Human) protein is Ras-related protein Rab-26.